A 63-amino-acid polypeptide reads, in one-letter code: MIIVSLKEGENLEKALKKFKRKFERTGVSKELKRRQAFVKPSVLRRNQKIHAIYAQKFLQSGD.

It belongs to the bacterial ribosomal protein bS21 family.

This is Small ribosomal subunit protein bS21 from Azobacteroides pseudotrichonymphae genomovar. CFP2.